Reading from the N-terminus, the 149-residue chain is Putative pre-16S rRNA nuclease (149 aa).

Belongs to the YqgF nuclease family.

It localises to the cytoplasm. Could be a nuclease involved in processing of the 5'-end of pre-16S rRNA. This Synechococcus elongatus (strain ATCC 33912 / PCC 7942 / FACHB-805) (Anacystis nidulans R2) protein is Putative pre-16S rRNA nuclease.